Reading from the N-terminus, the 647-residue chain is DNA mismatch repair protein MutL (647 aa).

The tract at residues 393 to 423 is disordered; the sequence is VSLVANKQQPTVKQAKRSADDSDSEHGKLDY. Residues 409–423 are compositionally biased toward basic and acidic residues; it reads RSADDSDSEHGKLDY.

This sequence belongs to the DNA mismatch repair MutL/HexB family.

In terms of biological role, this protein is involved in the repair of mismatches in DNA. It is required for dam-dependent methyl-directed DNA mismatch repair. May act as a 'molecular matchmaker', a protein that promotes the formation of a stable complex between two or more DNA-binding proteins in an ATP-dependent manner without itself being part of a final effector complex. This is DNA mismatch repair protein MutL from Streptococcus thermophilus (strain CNRZ 1066).